We begin with the raw amino-acid sequence, 497 residues long: NAD(P)H-quinone oxidoreductase subunit 2, chloroplastic (497 aa).

14 helical membrane passes run 13–33, 37–57, 76–96, 103–123, 129–149, 164–184, 206–226, 240–260, 274–294, 311–331, 332–352, 373–393, 406–426, and 462–482; these read VILP…LDLI, SAWL…ALVF, FTIS…LIST, GMGL…GLFL, LVTV…LVGY, LLMG…LYGL, IAVW…LSAF, PTPV…ALAT, WHVL…LIAA, AGYL…GMIT, YMVT…LFGL, AFCL…AGFF, GLYL…YYYL, and VGIA…NPII.

It belongs to the complex I subunit 2 family. As to quaternary structure, NDH is composed of at least 16 different subunits, 5 of which are encoded in the nucleus.

Its subcellular location is the plastid. It localises to the chloroplast thylakoid membrane. It carries out the reaction a plastoquinone + NADH + (n+1) H(+)(in) = a plastoquinol + NAD(+) + n H(+)(out). The catalysed reaction is a plastoquinone + NADPH + (n+1) H(+)(in) = a plastoquinol + NADP(+) + n H(+)(out). Its function is as follows. NDH shuttles electrons from NAD(P)H:plastoquinone, via FMN and iron-sulfur (Fe-S) centers, to quinones in the photosynthetic chain and possibly in a chloroplast respiratory chain. The immediate electron acceptor for the enzyme in this species is believed to be plastoquinone. Couples the redox reaction to proton translocation, and thus conserves the redox energy in a proton gradient. The sequence is that of NAD(P)H-quinone oxidoreductase subunit 2, chloroplastic from Zygnema circumcarinatum (Green alga).